Reading from the N-terminus, the 339-residue chain is MTVRVGINGFGRIGRNFYRALLAQQEHGIADVQVVAINDITDNSTLAYLLKFDSILGRLPHDVSLEEEDTIVVGSEKIKALAVREGPAALPWHAFGVDVVVESTGLFTNAAKAKGHLEAGAKKVIVSAPATDPDITIVFGVNDDKYDGSQNIISNASCTTNCLAPLAKVLHDQFGIVKGLMTTVHAYTQDQNLQDGPHSDLRRARAAALNVVPTSTGAAKAIGLVMPELKGKLDGYALRVPIPTGSVTDLTADLSKCVSVNEINAVFQDAAEGRLKGILKYVDAPIVSSDIVTDPHSSIFDSGLTKVIASQAKVVSWYDNEWGYSNRLVDLVGLVGKSL.

NAD(+) contacts are provided by residues 12-13 (RI), D39, R84, and S127. D-glyceraldehyde 3-phosphate is bound by residues 157–159 (SCT), T188, R203, 216–217 (TG), and R239. Catalysis depends on C158, which acts as the Nucleophile. N320 contributes to the NAD(+) binding site.

Belongs to the glyceraldehyde-3-phosphate dehydrogenase family. In terms of assembly, homotetramer.

Its subcellular location is the cytoplasm. The enzyme catalyses D-glyceraldehyde 3-phosphate + phosphate + NAD(+) = (2R)-3-phospho-glyceroyl phosphate + NADH + H(+). It functions in the pathway carbohydrate degradation; glycolysis; pyruvate from D-glyceraldehyde 3-phosphate: step 1/5. Catalyzes the oxidative phosphorylation of glyceraldehyde 3-phosphate (G3P) to 1,3-bisphosphoglycerate (BPG) using the cofactor NAD. The first reaction step involves the formation of a hemiacetal intermediate between G3P and a cysteine residue, and this hemiacetal intermediate is then oxidized to a thioester, with concomitant reduction of NAD to NADH. The reduced NADH is then exchanged with the second NAD, and the thioester is attacked by a nucleophilic inorganic phosphate to produce BPG. This Mycobacterium leprae (strain TN) protein is Glyceraldehyde-3-phosphate dehydrogenase (gapA).